The primary structure comprises 432 residues: Putative D-alanyl-D-alanine carboxypeptidase (432 aa).

Residues 7–25 (ATVLLTFSLSAFAVEYPVL) form a helical; Signal-anchor membrane-spanning segment.

It belongs to the peptidase S12 family. YfeW subfamily.

It is found in the cell inner membrane. The catalysed reaction is Preferential cleavage: (Ac)2-L-Lys-D-Ala-|-D-Ala. Also transpeptidation of peptidyl-alanyl moieties that are N-acyl substituents of D-alanine.. The sequence is that of Putative D-alanyl-D-alanine carboxypeptidase from Salmonella heidelberg (strain SL476).